Reading from the N-terminus, the 606-residue chain is Glutamine--fructose-6-phosphate aminotransferase [isomerizing] (606 aa).

The Nucleophile; for GATase activity role is filled by Cys2. Residues 2-217 (CGIIGIVGKE…EGDYVALDHD (216 aa)) enclose the Glutamine amidotransferase type-2 domain. SIS domains are found at residues 280-421 (VPGD…ARGT) and 454-596 (IAAD…VDQP). Lys601 functions as the For Fru-6P isomerization activity in the catalytic mechanism.

As to quaternary structure, homodimer.

Its subcellular location is the cytoplasm. The catalysed reaction is D-fructose 6-phosphate + L-glutamine = D-glucosamine 6-phosphate + L-glutamate. Functionally, catalyzes the first step in hexosamine metabolism, converting fructose-6P into glucosamine-6P using glutamine as a nitrogen source. In Caulobacter vibrioides (strain ATCC 19089 / CIP 103742 / CB 15) (Caulobacter crescentus), this protein is Glutamine--fructose-6-phosphate aminotransferase [isomerizing].